The chain runs to 187 residues: Endoribonuclease YbeY (187 aa).

The Zn(2+) site is built by His-151, His-155, and His-161.

Belongs to the endoribonuclease YbeY family. Zn(2+) serves as cofactor.

It is found in the cytoplasm. Functionally, single strand-specific metallo-endoribonuclease involved in late-stage 70S ribosome quality control and in maturation of the 3' terminus of the 16S rRNA. The chain is Endoribonuclease YbeY from Prochlorococcus marinus (strain MIT 9313).